We begin with the raw amino-acid sequence, 164 residues long: Phosphopantetheine adenylyltransferase (164 aa).

T9 serves as a coordination point for substrate. ATP-binding positions include 9–10 and H17; that span reads TF. Substrate is bound by residues K41, T76, and R90. Residues 91–93, E101, and 126–132 each bind ATP; these read GLR and YQFVSSS.

This sequence belongs to the bacterial CoaD family. As to quaternary structure, homohexamer. Mg(2+) serves as cofactor.

The protein resides in the cytoplasm. The catalysed reaction is (R)-4'-phosphopantetheine + ATP + H(+) = 3'-dephospho-CoA + diphosphate. The protein operates within cofactor biosynthesis; coenzyme A biosynthesis; CoA from (R)-pantothenate: step 4/5. In terms of biological role, reversibly transfers an adenylyl group from ATP to 4'-phosphopantetheine, yielding dephospho-CoA (dPCoA) and pyrophosphate. The sequence is that of Phosphopantetheine adenylyltransferase from Coprothermobacter proteolyticus (strain ATCC 35245 / DSM 5265 / OCM 4 / BT).